The following is a 489-amino-acid chain: uncharacterized protein (489 aa).

A run of 13 helical transmembrane segments spans residues 1 to 21 (MNAA…LGIR), 40 to 60 (FGTV…FTFL), 74 to 94 (FYII…LPAV), 117 to 137 (PLLG…YLVL), 158 to 178 (AAIW…GIHG), 188 to 208 (IMIL…YYGG), 234 to 254 (AWFS…PHTF), 271 to 291 (IIMP…FAAI), 318 to 338 (FVGI…SMIL), 362 to 382 (VSAL…YFTF), 388 to 408 (IVTL…ALLF), 422 to 442 (FAGI…ETTI), and 456 to 476 (LNVG…VSLM).

The protein belongs to the sodium:solute symporter (SSF) (TC 2.A.21) family.

The protein resides in the cell membrane. This is an uncharacterized protein from Bacillus subtilis (strain 168).